Here is a 512-residue protein sequence, read N- to C-terminus: 2,3-bisphosphoglycerate-independent phosphoglycerate mutase (512 aa).

Mn(2+) is bound by residues aspartate 12 and serine 62. The Phosphoserine intermediate role is filled by serine 62. Residues histidine 123, 153 to 154, arginine 185, arginine 191, 260 to 263, and lysine 333 contribute to the substrate site; these read RD and RPDR. The Mn(2+) site is built by aspartate 400, histidine 404, aspartate 441, histidine 442, and histidine 460.

Belongs to the BPG-independent phosphoglycerate mutase family. Monomer. Mn(2+) is required as a cofactor.

It catalyses the reaction (2R)-2-phosphoglycerate = (2R)-3-phosphoglycerate. The protein operates within carbohydrate degradation; glycolysis; pyruvate from D-glyceraldehyde 3-phosphate: step 3/5. Catalyzes the interconversion of 2-phosphoglycerate and 3-phosphoglycerate. The sequence is that of 2,3-bisphosphoglycerate-independent phosphoglycerate mutase from Clostridium perfringens (strain ATCC 13124 / DSM 756 / JCM 1290 / NCIMB 6125 / NCTC 8237 / Type A).